Reading from the N-terminus, the 93-residue chain is UPF0473 protein BH1270 (93 aa).

Belongs to the UPF0473 family.

In Halalkalibacterium halodurans (strain ATCC BAA-125 / DSM 18197 / FERM 7344 / JCM 9153 / C-125) (Bacillus halodurans), this protein is UPF0473 protein BH1270.